Reading from the N-terminus, the 414-residue chain is Protein DNA-DAMAGE INDUCIBLE 1 (414 aa).

The Ubiquitin-like domain maps to 1-76; that stretch reads MRITVMTAGE…LMMMVSNASS (76 aa). Positions 213-292 constitute a Peptidase A2 domain; sequence LKAFVDSGAQ…NMEFLFGLDM (80 aa). Aspartate 218 is an active-site residue. Residues 332–374 are disordered; sequence ERVPNDASSSGATVPSGFTEKKNNTVANPTSQQPKRQNTSEGP. Positions 355-372 are enriched in polar residues; that stretch reads NTVANPTSQQPKRQNTSE. Residues 374–414 form the UBA domain; it reads PEFEAKIAKLVELGFSRDSVIQALKLFEGNEEQAAGFLFGG.

It belongs to the DDI1 family. Homodimer.

The protein localises to the cytoplasm. It is found in the cytosol. In terms of biological role, receptor of ubiquitinated protein targeted to ubiquitin/proteasome-mediated proteolysis (UPP). Relatively weak affinity for both 'Lys-48'- and 'Lys-63'-linked ubiquitin chains with a slight preference for 'Lys-48-'linked chains of three or more ubiquitin units. The polypeptide is Protein DNA-DAMAGE INDUCIBLE 1 (Arabidopsis thaliana (Mouse-ear cress)).